The following is a 65-amino-acid chain: Temporin-SN1 (65 aa).

An N-terminal signal peptide occupies residues 1–22 (MFTTKKSLLLLFFLGTINLSLC). The propeptide at 23 to 44 (QEERNAEEERRDGDDEGGVEVQ) is removed in mature form. Lysine amide is present on lysine 65.

Belongs to the frog skin active peptide (FSAP) family. Temporin subfamily. As to expression, expressed by the skin glands.

It is found in the secreted. Antimicrobial peptide. Active against a variety of Gram-positive bacterial strains. Not active against Gram-negative bacteria and against fungi. Shows hemolytic activity against human erythrocytes. The sequence is that of Temporin-SN1 from Sylvirana spinulosa (Fine-spined frog).